We begin with the raw amino-acid sequence, 735 residues long: Exocyst complex component 7 (735 aa).

2 coiled-coil regions span residues 5–42 and 63–85; these read QEAS…TKNM and VHKQ…SCLD. Serine 133 bears the Phosphoserine mark. Positions 239–268 are disordered; the sequence is HKSSSSSGVPYSPAIPNKRKDTPTKKPVKR.

The protein belongs to the EXO70 family. The exocyst complex is composed of EXOC1, EXOC2, EXOC3, EXOC4, EXOC5, EXOC6, EXOC7 and EXOC8. Interacts with ARHQ in a GTP-dependent manner. Interacts with RAB11FIP3. In terms of tissue distribution, abundant in the ventricular zone, the outer subventricular zone and the cortical plate of the fetal cortex.

Its subcellular location is the cytoplasm. It is found in the cytosol. The protein localises to the cell membrane. It localises to the midbody. The protein resides in the midbody ring. Component of the exocyst complex involved in the docking of exocytic vesicles with fusion sites on the plasma membrane. In adipocytes, plays a crucial role in targeting SLC2A4 vesicle to the plasma membrane in response to insulin, perhaps directing the vesicle to the precise site of fusion. It is required for neuron survival and plays an essential role in cortical development. The polypeptide is Exocyst complex component 7 (EXOC7) (Homo sapiens (Human)).